We begin with the raw amino-acid sequence, 85 residues long: MELQKIEQILKDTLNIAEVYAQGENAHFGVIVVSDEIAALSRVKQQQTIYAPLMPYFSTGEIHALTIKTYTVEKWKRDRALNQFN.

It belongs to the BolA/IbaG family.

This is an uncharacterized protein from Haemophilus influenzae (strain ATCC 51907 / DSM 11121 / KW20 / Rd).